The chain runs to 526 residues: MALLTLFNQIWQEGQLQSSTSSFNIFLVPILCLSIFILFSLTRSSSPSEKNRKLKLPPSPPRLPWIGNLHQLGSFPHRSLRALSKKYGDVMFMHFGKVPTLIVSSAEMAKDVMKTQDIVFCSRPQTTAPSILFYDGHDIAFAPYGEYWRQVRRICVLELLSLKRVHQFQYARVEEVAELVSKIRKASASANGAPINLGELLVSTSNNIICRCILGQKFEDKEDNWFGETTKELMTQVMSFSFGDFFPSLKWIDRARGYLAYLKSIWLEFDKFFDKLIDEHKAAQKEGKPRKKDIVDILLDVQNDGSLDFELTTSNVKAILQDMFVGGSDTSWTAAIWLMSELSQNPRVMKKVQEEVRRVAGKRGYVEESDINEMKYLTCVIKENLRLHPPAPLLLPREAMSDVKLGGFDIPAKTQVFVNAYAVQRDPKVWDKPDEFMPERFEENNVGFVGQDFELIPFGAGRRVCPGLAFGVASAQYVLANMLYWFDWKLPSGGSKLAETLDMSEVYGLTVHKKSPLYLVPTPYSP.

Residues 22 to 42 form a helical membrane-spanning segment; it reads SFNIFLVPILCLSIFILFSLT. Cysteine 465 provides a ligand contact to heme.

It belongs to the cytochrome P450 family. The cofactor is heme. Expressed in seedlings and leaves.

The protein localises to the membrane. The catalysed reaction is (E)-phenylacetaldehyde oxime + reduced [NADPH--hemoprotein reductase] + O2 = (R)-mandelonitrile + oxidized [NADPH--hemoprotein reductase] + 2 H2O + H(+). It catalyses the reaction phenylacetonitrile + reduced [NADPH--hemoprotein reductase] + O2 = (R)-mandelonitrile + oxidized [NADPH--hemoprotein reductase] + H2O + H(+). Its function is as follows. Involved in L-phenylalanine-derived cyanogenic glycoside biosynthesis, including prunasin and amygdalin defensive agents. Catalyzes the conversion of phenylacetaldoxime (PAOx) and phenylacetonitrile (PAN) into mandelonitrile (MAN). To a lower extent, can convert various aromatic aldoximes and nitriles; mediates the transformation of 4-hydroxyphenylacetaldoxime, 4-hydroxyphenylacetonitrile, indole-3-acetal-doxime and indole-3-acetonitrile into the corresponding hydroxynitriles, but cannot use the aliphatic compounds 2-methylpropanaloxime and 2-methylpropanenitrile as substrates. The sequence is that of Phenylacetaldehyde oxime monooxygenase CYP71AN24 from Prunus mume (Japanese apricot).